The sequence spans 232 residues: Two-component response regulator ORR4 (232 aa).

The Response regulatory domain occupies 11 to 147 (HVLAVDDSLI…DMKKLKSHLL (137 aa)). Residue Asp-80 is modified to 4-aspartylphosphate. 2 disordered regions span residues 153–174 (LPMAAAAPDKPPHKPDEAAASA) and 202–232 (AAAMEQEVISSPDQRTKPRLSSTSSGLAVET). Residues 209–232 (VISSPDQRTKPRLSSTSSGLAVET) are compositionally biased toward polar residues.

This sequence belongs to the ARR family. Type-A subfamily. Post-translationally, two-component system major event consists of a His-to-Asp phosphorelay between a sensor histidine kinase (HK) and a response regulator (RR). In plants, the His-to-Asp phosphorelay involves an additional intermediate named Histidine-containing phosphotransfer protein (HPt). This multistep phosphorelay consists of a His-Asp-His-Asp sequential transfer of a phosphate group between first a His and an Asp of the HK protein, followed by the transfer to a conserved His of the HPt protein and finally the transfer to an Asp in the receiver domain of the RR protein. As to expression, expressed in mature leaves and flowers, and at low levels in roots and shoots.

Its function is as follows. Functions as a response regulator involved in His-to-Asp phosphorelay signal transduction system. Phosphorylation of the Asp residue in the receiver domain activates the ability of the protein to promote the transcription of target genes. Type-A response regulators seem to act as negative regulators of the cytokinin signaling. This chain is Two-component response regulator ORR4, found in Oryza sativa subsp. indica (Rice).